The primary structure comprises 274 residues: Bis(5'-nucleosyl)-tetraphosphatase, symmetrical (274 aa).

This sequence belongs to the Ap4A hydrolase family.

The enzyme catalyses P(1),P(4)-bis(5'-adenosyl) tetraphosphate + H2O = 2 ADP + 2 H(+). Hydrolyzes diadenosine 5',5'''-P1,P4-tetraphosphate to yield ADP. The protein is Bis(5'-nucleosyl)-tetraphosphatase, symmetrical (apaH) of Buchnera aphidicola subsp. Acyrthosiphon pisum (strain APS) (Acyrthosiphon pisum symbiotic bacterium).